Here is a 281-residue protein sequence, read N- to C-terminus: Small ribosomal subunit protein uS2 (281 aa).

A disordered region spans residues 233 to 281 (NKAEGEAAEQPMAAWEKELLTNEAPAEASAEAAAPAAAEGETAEAPKAE). A compositionally biased stretch (low complexity) spans 255–275 (EAPAEASAEAAAPAAAEGETA).

The protein belongs to the universal ribosomal protein uS2 family.

The protein is Small ribosomal subunit protein uS2 of Bifidobacterium longum (strain DJO10A).